A 241-amino-acid chain; its full sequence is Hydantoin racemase (241 aa).

The protein belongs to the HyuE racemase family. In terms of assembly, homotetramer.

It carries out the reaction a D-5-monosubstituted hydantoin = a L-5-monosubstituted hydantoin. The catalysed reaction is D-5-benzylhydantoin = L-5-benzylhydantoin. The enzyme catalyses D-5-isobutylhydantoin = L-5-isobutylhydantoin. Inhibited by Cu(2+), Hg(2+), Pb(2+) and Zn(2+). The activity is twofold lower in the presence of Mn(2+), Co(2+) and Ni(2+). The insignificant effect of the metal chelating agent EDTA on the hydantoin racemase activity would indicate that it is not a metalloenzyme. Functionally, may be involved in the asymmetric conversion of racemic 5-substituted hydantoins to the corresponding L-amino acids. Catalyzes the racemization via enolization of D- and L-5-monosubstituted hydantoins. The polypeptide is Hydantoin racemase (Rhizobium meliloti (Ensifer meliloti)).